Consider the following 526-residue polypeptide: Opine oxidase subunit A (526 aa).

The [2Fe-2S] cluster site is built by cysteine 396, cysteine 398, cysteine 431, and cysteine 436.

It to T-protein and to dimethylglycine dehydrogenase. As to quaternary structure, heterodimer of a subunit A and a subunit B. [2Fe-2S] cluster serves as cofactor.

It functions in the pathway opine metabolism; octopine degradation. In terms of biological role, oxidative cleavage of octopine into L-arginine and pyruvate. This is Opine oxidase subunit A (ooxA) from Rhizobium meliloti (Ensifer meliloti).